The sequence spans 183 residues: Translation initiation factor IF-3 (183 aa).

This sequence belongs to the IF-3 family. As to quaternary structure, monomer.

The protein resides in the cytoplasm. Functionally, IF-3 binds to the 30S ribosomal subunit and shifts the equilibrium between 70S ribosomes and their 50S and 30S subunits in favor of the free subunits, thus enhancing the availability of 30S subunits on which protein synthesis initiation begins. This is Translation initiation factor IF-3 from Yersinia enterocolitica serotype O:8 / biotype 1B (strain NCTC 13174 / 8081).